The primary structure comprises 395 residues: Phosphopentomutase (395 aa).

Residues Asp14, Asp286, His291, Asp327, His328, and His339 each coordinate Mn(2+).

It belongs to the phosphopentomutase family. The cofactor is Mn(2+).

The protein localises to the cytoplasm. It carries out the reaction 2-deoxy-alpha-D-ribose 1-phosphate = 2-deoxy-D-ribose 5-phosphate. The enzyme catalyses alpha-D-ribose 1-phosphate = D-ribose 5-phosphate. It participates in carbohydrate degradation; 2-deoxy-D-ribose 1-phosphate degradation; D-glyceraldehyde 3-phosphate and acetaldehyde from 2-deoxy-alpha-D-ribose 1-phosphate: step 1/2. Functionally, isomerase that catalyzes the conversion of deoxy-ribose 1-phosphate (dRib-1-P) and ribose 1-phosphate (Rib-1-P) to deoxy-ribose 5-phosphate (dRib-5-P) and ribose 5-phosphate (Rib-5-P), respectively. The chain is Phosphopentomutase from Staphylococcus haemolyticus (strain JCSC1435).